We begin with the raw amino-acid sequence, 120 residues long: Large ribosomal subunit protein bL19 (120 aa).

Belongs to the bacterial ribosomal protein bL19 family.

Its function is as follows. This protein is located at the 30S-50S ribosomal subunit interface and may play a role in the structure and function of the aminoacyl-tRNA binding site. The sequence is that of Large ribosomal subunit protein bL19 from Picosynechococcus sp. (strain ATCC 27264 / PCC 7002 / PR-6) (Agmenellum quadruplicatum).